The sequence spans 545 residues: Membrane protein insertase YidC (545 aa).

A helical transmembrane segment spans residues 6 to 26 (LILFSALVLVLFLMWDAWQTD). Positions 34 to 59 (PPPPQPTASSGESSPVLPEAVPDAPP) are disordered. Transmembrane regions (helical) follow at residues 357-377 (LVGN…LVFF), 428-448 (GGCL…WMLL), and 505-525 (PVMF…YWVV).

This sequence belongs to the OXA1/ALB3/YidC family. Type 1 subfamily. As to quaternary structure, interacts with the Sec translocase complex via SecD. Specifically interacts with transmembrane segments of nascent integral membrane proteins during membrane integration.

The protein resides in the cell inner membrane. In terms of biological role, required for the insertion and/or proper folding and/or complex formation of integral membrane proteins into the membrane. Involved in integration of membrane proteins that insert both dependently and independently of the Sec translocase complex, as well as at least some lipoproteins. Aids folding of multispanning membrane proteins. The sequence is that of Membrane protein insertase YidC from Nitrosococcus oceani (strain ATCC 19707 / BCRC 17464 / JCM 30415 / NCIMB 11848 / C-107).